Reading from the N-terminus, the 573-residue chain is DNA ligase (573 aa).

Glu250 is a binding site for ATP. Residue Lys252 is the N6-AMP-lysine intermediate of the active site. The ATP site is built by Arg257, Arg272, Glu301, Phe342, Arg432, and Lys438.

This sequence belongs to the ATP-dependent DNA ligase family. Mg(2+) serves as cofactor.

The catalysed reaction is ATP + (deoxyribonucleotide)n-3'-hydroxyl + 5'-phospho-(deoxyribonucleotide)m = (deoxyribonucleotide)n+m + AMP + diphosphate.. Its function is as follows. DNA ligase that seals nicks in double-stranded DNA during DNA replication, DNA recombination and DNA repair. This chain is DNA ligase, found in Methanococcus vannielii (strain ATCC 35089 / DSM 1224 / JCM 13029 / OCM 148 / SB).